Consider the following 1582-residue polypeptide: MEPREMLSSCRQRGSESEFLQGSSSRSPPAPGCSGEPLKGISVGGERMEPEEEDELGSGRDVDCNSNADSEKWVAGDGLEEQEFSIKEANFTEGSLKLKIQTTKRAKKPPKNLENYICPPEIKITIKQSGDQKVSRTGKNSKATKEDERNHSKKKLLTAGDPTASDLKAFQTQAYERPQKHSTLQYDPGHSQGFTSDTLKPKHQQKSSSQSHMEWSSNSDSGPATQNCFISPEAGRDTASTSKVPALEPVASFAKAQSKKGSTGGAWSQLSSSSKDLLLGSVVPSPSSHNSPATPSSSAECNGLQPLGDQDGGSTKDLPEPPTLSSKKKSSKKDMISQTLPNSDLDWVKSAQKAFETTEGKREAYSADSAQEASPARQSISSVSNPENDSSHVRITIPIKTPSLDPSNHKRKKRQSIKAVVEKIVPEKALASGISMSSEVVNRILSNSEGSKKDPRVPKLGKMIENETPSVGLETGGNAEKIVPGGASKQRKPPMVMTSPTRTEHAPSGKLSEIQHPKFAAKRRCSKAKPPAMLREAVLATAEKLMVEPPSAYPITPSSPLYTNTDSLTVITPVKKKRGRPKKQPLLTVETIHEGTSTSPVSPISREFPGTKKRKRRRNLAKLAQLVPGEDKPMSEMKFHKKVGKLGVLDKKTIKTINKMKTLKRKNILNQILSCSSSVALKAKAPPETSPGAASIESKLGKQINVSKRGTIYIGKKRGRKPRTELPPPSEEPKTAIKHPRPVSSQPDVPAVPSSFQSPVASSPAAMHPLSTQLGGSNGNLSPASTETNFSELKTMPNLQPISALPTKTQKGIHGGTWKLSPPRLMANSPSHLCEIGSLKEITLSPVSESHSEETIPSDSGIGTDNNSTSDQAEKSSESRRRYSFDFCSLDNPEAIPSDTSTKNRHGHRQKHLIVDTFLAHESLKKPKHKRKRKSLQNRDDLQFLAELEELITKFQVFRISHRGYTFYHENPYPSIFRINFDQYYPVPYIQYDPLLYLRRTSDLKSKKKRGRPAKTNDTMTKVPFLQGFSYPIPSGSYYAPYGMPYTSMPMMNLGYYGQYPAPLYLSHTLGAASPFMRPTVPPPQFHASSHVKISGATKHKAKHGVHLQGTVGMGLGDIQPSLNPPKVGGATLSSSRLHKRKHKHKRKHKEDRILGTHDNLSGLFAGKATGFSSHLLSERLSGSDKELPLVSEKSKHKERQKHQHGEASHKVSKNNFEVDTLSTLSLSDAQHWTQAKDKGDLSSEPVESCAKRYSGSGGDSTRSEGLDVFSEMNPSSDKWDSDMGGSKRRSFEGFGTYREKDIQAFKMNRKERGSYESSMSPGMPSPHLKVDQTAAHSKSEGSISAMMARKKPTAVDSVAIPSAPVLSLLAASAATSDAASSSLKKRFKRREIEAIQCEVRKMCHYTKLLSTKKNLDHVNKILKAKRLQRQSKTGNNFVKKRRGRPRKQPSQFDEDSRDQMPVLEKCIDLPSKRGQKPSLSPLALEPASGQDAVMATIEAVIHMAREAPPLPPPPPPPLPPPPPPPPPPPPLPKTARGGKRKHRPQPPAQPAQPTPQPLPQEEEVKAKRPRKSRASESDVLP.

Disordered regions lie at residues 1-76 (MEPR…WVAG), 124-246 (ITIK…KVPA), 278-416 (LLGS…KRQS), and 446-513 (SNSE…KLSE). Residues 18-27 (EFLQGSSSRS) show a composition bias toward polar residues. A compositionally biased stretch (basic and acidic residues) spans 57–74 (GSGRDVDCNSNADSEKWV). 2 stretches are compositionally biased toward polar residues: residues 126 to 141 (IKQSGDQKVSRTGKNS) and 213 to 229 (MEWSSNSDSGPATQNCF). Positions 278 to 298 (LLGSVVPSPSSHNSPATPSSS) are enriched in low complexity. Residues 356-365 (ETTEGKREAY) are compositionally biased toward basic and acidic residues. Polar residues predominate over residues 368-388 (DSAQEASPARQSISSVSNPEN). Over residues 450–465 (GSKKDPRVPKLGKMIE) the composition is skewed to basic and acidic residues. The a.T hook 1 DNA-binding region spans 575-587 (KKKRGRPKKQPLL). Disordered regions lie at residues 595-617 (GTSTSPVSPISREFPGTKKRKRR) and 709-787 (RGTI…ASTE). Residues 770–787 (LSTQLGGSNGNLSPASTE) show a composition bias toward polar residues. Lys-808 bears the N6-acetyllysine mark. Over residues 845-871 (SPVSESHSEETIPSDSGIGTDNNSTSD) the composition is skewed to polar residues. The tract at residues 845 to 880 (SPVSESHSEETIPSDSGIGTDNNSTSDQAEKSSESR) is disordered. Positions 1007–1019 (KKKRGRPAKTNDT) form a DNA-binding region, a.T hook 2. Disordered stretches follow at residues 1128–1155 (VGGATLSSSRLHKRKHKHKRKHKEDRIL), 1182–1215 (SGSDKELPLVSEKSKHKERQKHQHGEASHKVSKN), 1236–1265 (AKDKGDLSSEPVESCAKRYSGSGGDSTRSE), 1429–1461 (QRQSKTGNNFVKKRRGRPRKQPSQFDEDSRDQM), 1470–1489 (LPSKRGQKPSLSPLALEPAS), and 1507–1582 (EAPP…DVLP). Positions 1137-1150 (RLHKRKHKHKRKHK) are enriched in basic residues. Basic and acidic residues predominate over residues 1182 to 1196 (SGSDKELPLVSEKSK). The segment covering 1439 to 1448 (VKKRRGRPRK) has biased composition (basic residues). Positions 1440 to 1452 (KKRRGRPRKQPSQ) form a DNA-binding region, a.T hook 3. 2 stretches are compositionally biased toward pro residues: residues 1509-1533 (PPLPPPPPPPLPPPPPPPPPPPPLP) and 1546-1559 (QPPAQPAQPTPQPL).

In terms of assembly, interacts with SET.

Its subcellular location is the nucleus. This chain is SET-binding protein (Setbp1), found in Mus musculus (Mouse).